The following is a 133-amino-acid chain: Snaclec purpureotin subunit alpha (133 aa).

Disulfide bonds link cysteine 2/cysteine 13, cysteine 30/cysteine 127, and cysteine 102/cysteine 119. Residues 9 to 128 enclose the C-type lectin domain; it reads FKQYCYQIIK…CEQKHIFMCK (120 aa).

The protein belongs to the snaclec family. Homodimer (non-covalently linked) of heterodimer of alpha and beta subunits (disulfide-linked). Expressed by the venom gland.

It localises to the secreted. Functionally, snaclec that induces platelet aggregation without any cofactor in a dose-dependent manner. Its platelet aggregation effect is blocked by echicetin, suggesting it is a GPIb-binding protein which binds to the same or a closely related GPIb site on platelets as echicetin. The sequence is that of Snaclec purpureotin subunit alpha from Trimeresurus purpureomaculatus (Mangrove pit viper).